The chain runs to 205 residues: ATP synthase subunit b 1 (205 aa).

The segment covering M1–Q15 has biased composition (polar residues). Positions M1–A26 are disordered. Low complexity predominate over residues P16–A26. A helical membrane pass occupies residues S56–P78.

It belongs to the ATPase B chain family. F-type ATPases have 2 components, F(1) - the catalytic core - and F(0) - the membrane proton channel. F(1) has five subunits: alpha(3), beta(3), gamma(1), delta(1), epsilon(1). F(0) has three main subunits: a(1), b(2) and c(10-14). The alpha and beta chains form an alternating ring which encloses part of the gamma chain. F(1) is attached to F(0) by a central stalk formed by the gamma and epsilon chains, while a peripheral stalk is formed by the delta and b chains.

The protein localises to the cell inner membrane. Its function is as follows. F(1)F(0) ATP synthase produces ATP from ADP in the presence of a proton or sodium gradient. F-type ATPases consist of two structural domains, F(1) containing the extramembraneous catalytic core and F(0) containing the membrane proton channel, linked together by a central stalk and a peripheral stalk. During catalysis, ATP synthesis in the catalytic domain of F(1) is coupled via a rotary mechanism of the central stalk subunits to proton translocation. Functionally, component of the F(0) channel, it forms part of the peripheral stalk, linking F(1) to F(0). This chain is ATP synthase subunit b 1, found in Brucella anthropi (strain ATCC 49188 / DSM 6882 / CCUG 24695 / JCM 21032 / LMG 3331 / NBRC 15819 / NCTC 12168 / Alc 37) (Ochrobactrum anthropi).